A 153-amino-acid polypeptide reads, in one-letter code: Arginine repressor (153 aa).

It belongs to the ArgR family.

The protein localises to the cytoplasm. It participates in amino-acid biosynthesis; L-arginine biosynthesis [regulation]. In terms of biological role, regulates arginine biosynthesis genes. The sequence is that of Arginine repressor from Glaesserella parasuis serovar 5 (strain SH0165) (Haemophilus parasuis).